A 282-amino-acid polypeptide reads, in one-letter code: Release factor glutamine methyltransferase (282 aa).

Positions 141, 169, and 186 each coordinate S-adenosyl-L-methionine. 186–189 (NPPY) serves as a coordination point for substrate.

Belongs to the protein N5-glutamine methyltransferase family. PrmC subfamily.

It carries out the reaction L-glutaminyl-[peptide chain release factor] + S-adenosyl-L-methionine = N(5)-methyl-L-glutaminyl-[peptide chain release factor] + S-adenosyl-L-homocysteine + H(+). In terms of biological role, methylates the class 1 translation termination release factors RF1/PrfA and RF2/PrfB on the glutamine residue of the universally conserved GGQ motif. This Mycoplasma mycoides subsp. mycoides SC (strain CCUG 32753 / NCTC 10114 / PG1) protein is Release factor glutamine methyltransferase.